Reading from the N-terminus, the 416-residue chain is Actin-like protein 9 (416 aa).

Positions 1-40 are disordered; the sequence is MDASRPKSSESQSSLEAPRPGPNPSPNVVNKPLQRDSPGM.

Belongs to the actin family. Interacts with ACTL7A. In terms of tissue distribution, testis-specific.

It localises to the cytoplasmic vesicle. The protein resides in the secretory vesicle. It is found in the acrosome. Its subcellular location is the cytoplasm. The protein localises to the cytoskeleton. It localises to the perinuclear theca. Functionally, testis-specic protein that plays an important role in fusion of proacrosomal vesicles and perinuclear theca formation. The protein is Actin-like protein 9 of Homo sapiens (Human).